The sequence spans 251 residues: Uroporphyrinogen-III synthase (251 aa).

The segment at 231-251 is disordered; it reads PAPNPESLASSIVAFDEENSS.

The protein belongs to the uroporphyrinogen-III synthase family.

It catalyses the reaction hydroxymethylbilane = uroporphyrinogen III + H2O. Its pathway is porphyrin-containing compound metabolism; protoporphyrin-IX biosynthesis; coproporphyrinogen-III from 5-aminolevulinate: step 3/4. Its function is as follows. Catalyzes cyclization of the linear tetrapyrrole, hydroxymethylbilane, to the macrocyclic uroporphyrinogen III. The protein is Uroporphyrinogen-III synthase (ups1) of Schizosaccharomyces pombe (strain 972 / ATCC 24843) (Fission yeast).